Here is a 376-residue protein sequence, read N- to C-terminus: RCC1 domain-containing protein 1 (376 aa).

An interaction with KDM8 region spans residues 1-169; that stretch reads MAEERPGAWF…ARQLELGAEH (169 aa). An RCC1 1 repeat occupies 6–56; the sequence is PGAWFGFGFCGFGQELGSGRGRQVHSPSPLRAGVDICRVSASWSYTAFVTR. R141 bears the (3R)-3-hydroxyarginine mark. 3 RCC1 repeats span residues 176–227, 229–317, and 318–371; these read AGQV…CVSE, GDIY…VVTR, and TGEL…VYAV.

As to quaternary structure, found in a complex with KDM8. Interacts (via N-terminus) with KDM8 (via N-terminus). In terms of processing, specifically hydroxylated (with R stereochemistry) at C-3 of ARG-141 by KDM8.

It localises to the chromosome. In terms of biological role, plays a role in transcriptional repression of satellite repeats, possibly by regulating H3K36 methylation levels in centromeric regions together with KDM8. Possibly together with KDM8, is involved in proper mitotic spindle organization and chromosome segregation. Plays a role in regulating alpha-tubulin deacetylation and cytoskeletal microtubule stability, thereby promoting cell migration and TGF-beta-induced epithelial to mesenchymal transition (EMT), potentially through the inhibition of KDM8. The polypeptide is RCC1 domain-containing protein 1 (Homo sapiens (Human)).